Here is a 439-residue protein sequence, read N- to C-terminus: 23S rRNA (uracil(1939)-C(5))-methyltransferase RlmD (439 aa).

The region spanning 1–54 (MTAPVLIESLDQEGRGVAHAEGKVIFIEGALPGEVVTYNAYRRKPSFELAQVGQ) is the TRAM domain. Positions 67, 73, 76, and 155 each coordinate [4Fe-4S] cluster. 6 residues coordinate S-adenosyl-L-methionine: glutamine 264, phenylalanine 293, asparagine 298, glutamate 314, asparagine 342, and aspartate 363. The active-site Nucleophile is cysteine 391.

This sequence belongs to the class I-like SAM-binding methyltransferase superfamily. RNA M5U methyltransferase family. RlmD subfamily.

It carries out the reaction uridine(1939) in 23S rRNA + S-adenosyl-L-methionine = 5-methyluridine(1939) in 23S rRNA + S-adenosyl-L-homocysteine + H(+). Catalyzes the formation of 5-methyl-uridine at position 1939 (m5U1939) in 23S rRNA. The polypeptide is 23S rRNA (uracil(1939)-C(5))-methyltransferase RlmD (Nitrosospira multiformis (strain ATCC 25196 / NCIMB 11849 / C 71)).